Consider the following 763-residue polypeptide: Serine/threonine-protein kinase PknG (763 aa).

The segment at 1–32 (MKREHMDHDTEDVGQAAQRADPPSGTTEGRLQ) is disordered. A Protein kinase domain is found at 160–406 (YEVKGCIAHG…SAEEMSAQLM (247 aa)). ATP is bound by residues 166 to 174 (IAHGGLGWV) and Lys190. Asp289 (proton acceptor) is an active-site residue.

The protein belongs to the protein kinase superfamily. Ser/Thr protein kinase family. Post-translationally, autophosphorylated.

The enzyme catalyses L-seryl-[protein] + ATP = O-phospho-L-seryl-[protein] + ADP + H(+). It carries out the reaction L-threonyl-[protein] + ATP = O-phospho-L-threonyl-[protein] + ADP + H(+). This chain is Serine/threonine-protein kinase PknG (pknG), found in Mycobacterium leprae (strain TN).